The sequence spans 346 residues: tRNA (guanine-N(7)-)-methyltransferase (346 aa).

S-adenosyl-L-methionine is bound by residues Gly101 and 124 to 125 (EI). Residues 149-191 (LKSAGGGGSDAAPESPAAPPTPSEAASPDSTTPSEQQAPTTLV) form a disordered region. A compositionally biased stretch (low complexity) spans 171–182 (SEAASPDSTTPS). Residues 204 to 205 (NT) and Cys224 contribute to the S-adenosyl-L-methionine site. Asp227 is a catalytic residue. 318-320 (TEE) contacts S-adenosyl-L-methionine.

The protein belongs to the class I-like SAM-binding methyltransferase superfamily. TrmB family. As to quaternary structure, forms a complex with trm82.

The protein localises to the nucleus. It catalyses the reaction guanosine(46) in tRNA + S-adenosyl-L-methionine = N(7)-methylguanosine(46) in tRNA + S-adenosyl-L-homocysteine. It functions in the pathway tRNA modification; N(7)-methylguanine-tRNA biosynthesis. Functionally, catalyzes the formation of N(7)-methylguanine at position 46 (m7G46) in tRNA. This chain is tRNA (guanine-N(7)-)-methyltransferase (trm8), found in Aspergillus terreus (strain NIH 2624 / FGSC A1156).